Consider the following 348-residue polypeptide: Protein RecA (348 aa).

65 to 72 (GPESSGKT) lines the ATP pocket.

Belongs to the RecA family.

The protein resides in the cytoplasm. Can catalyze the hydrolysis of ATP in the presence of single-stranded DNA, the ATP-dependent uptake of single-stranded DNA by duplex DNA, and the ATP-dependent hybridization of homologous single-stranded DNAs. It interacts with LexA causing its activation and leading to its autocatalytic cleavage. In Enterococcus gallinarum, this protein is Protein RecA.